A 242-amino-acid polypeptide reads, in one-letter code: MGDQPRPPVPPAPGSNPLPMGSTPPVLPGRTPNPNANVANQVGDPFRVLTPEELAAPISAASNKVATREQILGIVADLNALGFVGDPALGLFDLAFHCYDIGSSPSAQPVGPSPFGCSRMQVAAVVRNHCTLRQLCMFYAPSVWNKAVRDNRPPGNWSNLQFTPETKFAAFDFFDGVLNPASQEVPLWRQPTPQEIYASATHKDVATYRAASKAHDRISNSTLLTKGASRSTPPALLPGPDA.

A compositionally biased stretch (pro residues) spans 1-16; sequence MGDQPRPPVPPAPGSN. Disordered stretches follow at residues 1 to 41 and 219 to 242; these read MGDQ…VANQ and SNSTLLTKGASRSTPPALLPGPDA. Polar residues predominate over residues 219–232; sequence SNSTLLTKGASRST.

The protein belongs to the potexvirus capsid protein family.

It localises to the virion. In terms of biological role, required for genome encapsidation. Forms ribonucleoprotein complexes along with TGB1 helicase and viral RNA. The sequence is that of Coat protein from Strawberry mild yellow edge-associated virus (SMYEaV).